The following is a 239-amino-acid chain: Cysteine-rich venom protein ophanin (239 aa).

Residues 1–18 (MIAFTLLSLAAVLQQSFG) form the signal peptide. The SCP domain maps to 37-165 (VDLHNSLRRS…EYSYFYVCQY (129 aa)). Intrachain disulfides connect Cys-74/Cys-152, Cys-91/Cys-166, Cys-147/Cys-163, Cys-185/Cys-192, Cys-188/Cys-197, Cys-201/Cys-234, Cys-210/Cys-228, and Cys-219/Cys-232. Residues 201–234 (CTLYNEYTNCDSLVKQSSCQDEWIKSKCPASCFC) form the ShKT domain.

As to expression, expressed by the venom gland.

It is found in the secreted. Functionally, weakly blocks contraction of smooth muscle elicited by high potassium-induced depolarization, but does not block caffeine-stimulated contraction. May target voltage-gated calcium channels on smooth muscle. The sequence is that of Cysteine-rich venom protein ophanin from Ophiophagus hannah (King cobra).